Here is a 130-residue protein sequence, read N- to C-terminus: Small ribosomal subunit protein uS9 (130 aa).

It belongs to the universal ribosomal protein uS9 family.

In Cupriavidus pinatubonensis (strain JMP 134 / LMG 1197) (Cupriavidus necator (strain JMP 134)), this protein is Small ribosomal subunit protein uS9.